Here is a 252-residue protein sequence, read N- to C-terminus: Bidirectional sugar transporter SWEET3b (252 aa).

At 1-8 the chain is on the extracellular side; it reads MVSNTIRV. The helical transmembrane segment at 9–29 threads the bilayer; the sequence is AVGILGNAASMLLYAAPILTF. One can recognise a MtN3/slv 1 domain in the interval 10-98; the sequence is VGILGNAASM…SIYTWFAPRE (89 aa). At 30–43 the chain is on the cytoplasmic side; sequence RRVIKKGSVEEFSC. The chain crosses the membrane as a helical span at residues 44-64; it reads VPYILALFNCLLYTWYGLPVV. The Extracellular segment spans residues 65 to 75; that stretch reads SSGWENSTVSS. A glycan (N-linked (GlcNAc...) asparagine) is linked at Asn-70. The helical transmembrane segment at 76–96 threads the bilayer; it reads INGLGILLEIAFISIYTWFAP. Over 97–105 the chain is Cytoplasmic; it reads RERKKFVLR. The chain crosses the membrane as a helical span at residues 106-126; the sequence is MVLPVLAFFALTAIFSSFLFH. The Extracellular portion of the chain corresponds to 127 to 132; that stretch reads THGLRK. Residues 133-153 form a helical membrane-spanning segment; that stretch reads VFVGSIGLVASISMYSSPMVA. The region spanning 134-219 is the MtN3/slv 2 domain; it reads FVGSIGLVAS…LYCIYRKSHK (86 aa). The Cytoplasmic segment spans residues 154–167; sequence AKQVITTKSVEFMP. The chain crosses the membrane as a helical span at residues 168-188; sequence FYLSLFSFLSSALWMIYGLLG. Residues 189–190 lie on the Extracellular side of the membrane; sequence KD. Residues 191–211 form a helical membrane-spanning segment; that stretch reads LFIASPNFIGCPMGILQLVLY. The Cytoplasmic portion of the chain corresponds to 212–252; the sequence is CIYRKSHKEAEKLHDIDQENGLKVVTTHEKITGREPEAQRD.

It belongs to the SWEET sugar transporter family. In terms of assembly, forms homooligomers and/or heterooligomers.

It localises to the cell membrane. Its function is as follows. Mediates both low-affinity uptake and efflux of sugar across the plasma membrane. The sequence is that of Bidirectional sugar transporter SWEET3b (SWEET3B) from Oryza sativa subsp. japonica (Rice).